The primary structure comprises 52 residues: Large ribosomal subunit protein bL33 (52 aa).

Belongs to the bacterial ribosomal protein bL33 family.

This is Large ribosomal subunit protein bL33 from Chlamydia trachomatis serovar L2 (strain ATCC VR-902B / DSM 19102 / 434/Bu).